Consider the following 133-residue polypeptide: Putative biopolymer transport protein ExbD-like 1 (133 aa).

At Met-1–Asn-15 the chain is on the cytoplasmic side. Residues Ile-16–Val-32 traverse the membrane as a helical segment. Residues Thr-33–Pro-133 lie on the Periplasmic side of the membrane.

This sequence belongs to the ExbD/TolR family.

Its subcellular location is the cell inner membrane. In Helicobacter pylori (strain J99 / ATCC 700824) (Campylobacter pylori J99), this protein is Putative biopolymer transport protein ExbD-like 1.